The primary structure comprises 647 residues: Golgi-associated RAB2B interactor protein 3 (647 aa).

Over residues 188-202 the composition is skewed to polar residues; the sequence is IPTADTSTETKSTLV. Disordered regions lie at residues 188 to 220, 267 to 296, 361 to 384, and 465 to 573; these read IPTA…TSQD, TAGA…GSAR, SKSP…QERS, and RDGS…GFVS. Over residues 205 to 214 the composition is skewed to basic and acidic residues; the sequence is IHGEGDRDSK. Over residues 361–378 the composition is skewed to polar residues; sequence SKSPGSGQVATGLTGTAS. The residue at position 378 (serine 378) is a Phosphoserine. Positions 478-491 are enriched in basic and acidic residues; that stretch reads TQKEKRERRESDRK. A compositionally biased stretch (basic residues) spans 492–501; that stretch reads GSRKSSHHQR. Positions 494–511 match the Bipartite nuclear localization signal motif; that stretch reads RKSSHHQRTGASRHSSSK. Residues 528-556 show a composition bias toward basic and acidic residues; that stretch reads KTREDKKEKGRGSLRDQRHSSSYRSESRT. Phosphoserine occurs at positions 634 and 636.

Belongs to the GARIN family. In terms of assembly, interacts (via N-terminus) with RAB2B (in GTP-bound form). Interacts with FRG1.

Its subcellular location is the golgi apparatus. It is found in the nucleus. It localises to the cajal body. In terms of biological role, may be involved in RNA biogenesis. The sequence is that of Golgi-associated RAB2B interactor protein 3 (Garin3) from Rattus norvegicus (Rat).